The sequence spans 348 residues: Protein RecA (348 aa).

Residue 64–71 participates in ATP binding; sequence GPESSGKT. Over residues 325-335 the composition is skewed to basic and acidic residues; the sequence is YEIDGANKEPL. A disordered region spans residues 325–348; the sequence is YEIDGANKEPLEETEETLSLLDDE. The segment covering 336–348 has biased composition (acidic residues); the sequence is EETEETLSLLDDE.

The protein belongs to the RecA family.

Its subcellular location is the cytoplasm. In terms of biological role, can catalyze the hydrolysis of ATP in the presence of single-stranded DNA, the ATP-dependent uptake of single-stranded DNA by duplex DNA, and the ATP-dependent hybridization of homologous single-stranded DNAs. It interacts with LexA causing its activation and leading to its autocatalytic cleavage. The protein is Protein RecA of Listeria welshimeri serovar 6b (strain ATCC 35897 / DSM 20650 / CCUG 15529 / CIP 8149 / NCTC 11857 / SLCC 5334 / V8).